Consider the following 592-residue polypeptide: Polyadenylate-binding protein, cytoplasmic and nuclear (592 aa).

Positions 1–10 (MSDITEKTAE) are enriched in basic and acidic residues. The tract at residues 1-43 (MSDITEKTAEQLENLQINDDQQPAQSASAPSTSASESEASSVS) is disordered. Polar residues predominate over residues 11 to 20 (QLENLQINDD). Residues 21-43 (QQPAQSASAPSTSASESEASSVS) are compositionally biased toward low complexity. RRM domains are found at residues 50 to 128 (ASLY…WSER), 138 to 215 (GNIF…MHVP), 231 to 308 (TNIY…RAQK), and 334 to 411 (VNLF…IAQR). Residues 507-586 (NQFPRHQQQH…ALAAYENFKK (80 aa)) enclose the PABC domain.

This sequence belongs to the polyadenylate-binding protein type-1 family.

It localises to the cytoplasm. The protein resides in the nucleus. Functionally, binds the poly(A) tail of mRNA. Appears to be an important mediator of the multiple roles of the poly(A) tail in mRNA biogenesis, stability and translation. In the nucleus, involved in both mRNA cleavage and polyadenylation. Is also required for efficient mRNA export to the cytoplasm. Acts in concert with a poly(A)-specific nuclease (PAN) to affect poly(A) tail shortening, which may occur concomitantly with either nucleocytoplasmic mRNA transport or translational initiation. In the cytoplasm, stimulates translation initiation and regulates mRNA decay through translation termination-coupled poly(A) shortening, probably mediated by PAN. The sequence is that of Polyadenylate-binding protein, cytoplasmic and nuclear (PAB1) from Kluyveromyces lactis (strain ATCC 8585 / CBS 2359 / DSM 70799 / NBRC 1267 / NRRL Y-1140 / WM37) (Yeast).